We begin with the raw amino-acid sequence, 141 residues long: Meiotically up-regulated gene 118 protein (141 aa).

Positions 106 to 115 are enriched in polar residues; the sequence is LSSQKSARQP. The interval 106–141 is disordered; sequence LSSQKSARQPTKTVASSSSSSSKSTTVSKSSSKSQV. Over residues 116 to 141 the composition is skewed to low complexity; that stretch reads TKTVASSSSSSSKSTTVSKSSSKSQV.

It localises to the nucleus. Has a role in meiosis. This is Meiotically up-regulated gene 118 protein (mug118) from Schizosaccharomyces pombe (strain 972 / ATCC 24843) (Fission yeast).